Consider the following 156-residue polypeptide: Transcription factor E (156 aa).

The HTH TFE/IIEalpha-type domain occupies 1 to 72 (MYGEKAKKVL…LWILNIDQIE (72 aa)).

It belongs to the TFE family. In terms of assembly, monomer. Interaction with RNA polymerase subunits RpoF and RpoE is necessary for Tfe stimulatory transcription activity. Able to interact with Tbp and RNA polymerase in the absence of DNA promoter. Interacts both with the preinitiation and elongation complexes.

Functionally, transcription factor that plays a role in the activation of archaeal genes transcribed by RNA polymerase. Facilitates transcription initiation by enhancing TATA-box recognition by TATA-box-binding protein (Tbp), and transcription factor B (Tfb) and RNA polymerase recruitment. Not absolutely required for transcription in vitro, but particularly important in cases where Tbp or Tfb function is not optimal. It dynamically alters the nucleic acid-binding properties of RNA polymerases by stabilizing the initiation complex and destabilizing elongation complexes. Seems to translocate with the RNA polymerase following initiation and acts by binding to the non template strand of the transcription bubble in elongation complexes. The chain is Transcription factor E from Staphylothermus marinus (strain ATCC 43588 / DSM 3639 / JCM 9404 / F1).